The following is a 452-amino-acid chain: uncharacterized protein (452 aa).

Residues 1–452 (MTAVSSNRNP…LRKPEADTAL (452 aa)) are disordered. Composition is skewed to polar residues over residues 29–41 (RTGTPRTTAVSSN), 95–111 (SPQTGTPRTTAVSSNRN), 129–144 (SPQTGTPGTTAVSSNR), and 163–176 (SPQTGTPGTTAVSS). A compositionally biased stretch (basic and acidic residues) spans 177–193 (NRDHEDDGCLLKQESRG). Polar residues-rich tracts occupy residues 197 to 212 (SPQTGTPGTTAVSSNR), 231 to 245 (SPQTGTPGTTAVSSN), 265 to 280 (SPQTGTPRTTAVSSNR), 299 to 314 (SPQTGIPRTTAVSSNR), 333 to 347 (SPQTGTTRTTAVSSK), 376 to 394 (TAVSSNRDPRTTAVSSNRN), and 412 to 426 (SPQTGTPGTTAVSSN). Residues 439 to 452 (EPQELRKPEADTAL) are compositionally biased toward basic and acidic residues.

This is an uncharacterized protein from Homo sapiens (Human).